A 288-amino-acid polypeptide reads, in one-letter code: Histone H3-like centromeric protein hcp-3 (288 aa).

The disordered stretch occupies residues 96-194; the sequence is YHARKEQARR…VTKTRRYRPG (99 aa). Residues 178 to 193 are compositionally biased toward basic residues; sequence MRAGRNRVTKTRRYRP. The interval 191–288 is H3-like; it reads YRPGQKALEE…LYRRLCLRHL (98 aa).

The protein belongs to the histone H3 family. As to quaternary structure, forms a nucleosome-like histone octamer containing two molecules each of H2A, H2B, hcp-3 and H4 assembled in one hcp-3-H4 heterotetramer and two H2A-H2B heterodimers. The hcp-3-H4 heterotetramer is more compact and structurally more rigid than corresponding H3-H4 heterotetramers. Interacts with knl-2. Interacts with lin-53.

The protein resides in the nucleus. Its subcellular location is the chromosome. The protein localises to the centromere. It is found in the kinetochore. Histone H3-like variant which exclusively replaces conventional H3 in the nucleosome core of centromeric chromatin at the inner plate of the kinetochore. Required for recruitment and assembly of kinetochore proteins, mitotic progression and chromosome segregation. May serve as an epigenetic mark that propagates centromere identity through replication and cell division. Might promote cleavage furrow stability during cytokinesis. Not required for chromosome segregation during meiosis. In Caenorhabditis elegans, this protein is Histone H3-like centromeric protein hcp-3.